Consider the following 376-residue polypeptide: Chorismate synthase (376 aa).

The NADP(+) site is built by arginine 39 and arginine 45. FMN-binding positions include 115–117 (RSS), glycine 276, 291–295 (KPIPT), and arginine 317.

The protein belongs to the chorismate synthase family. Homotetramer. FMNH2 is required as a cofactor.

It catalyses the reaction 5-O-(1-carboxyvinyl)-3-phosphoshikimate = chorismate + phosphate. It participates in metabolic intermediate biosynthesis; chorismate biosynthesis; chorismate from D-erythrose 4-phosphate and phosphoenolpyruvate: step 7/7. Functionally, catalyzes the anti-1,4-elimination of the C-3 phosphate and the C-6 proR hydrogen from 5-enolpyruvylshikimate-3-phosphate (EPSP) to yield chorismate, which is the branch point compound that serves as the starting substrate for the three terminal pathways of aromatic amino acid biosynthesis. This reaction introduces a second double bond into the aromatic ring system. This chain is Chorismate synthase, found in Thermotoga sp. (strain RQ2).